The primary structure comprises 229 residues: Lipoprotein-releasing system ATP-binding protein LolD 1 (229 aa).

Residues 2–229 (LVVSELSKSY…VRRGRFGITA (228 aa)) enclose the ABC transporter domain. 38 to 45 (GPSGSGKT) is a binding site for ATP.

This sequence belongs to the ABC transporter superfamily. Lipoprotein translocase (TC 3.A.1.125) family. As to quaternary structure, the complex is composed of two ATP-binding proteins (LolD) and two transmembrane proteins (LolC and LolE).

The protein localises to the cell inner membrane. In terms of biological role, part of the ABC transporter complex LolCDE involved in the translocation of mature outer membrane-directed lipoproteins, from the inner membrane to the periplasmic chaperone, LolA. Responsible for the formation of the LolA-lipoprotein complex in an ATP-dependent manner. The polypeptide is Lipoprotein-releasing system ATP-binding protein LolD 1 (Rhodopirellula baltica (strain DSM 10527 / NCIMB 13988 / SH1)).